Here is a 314-residue protein sequence, read N- to C-terminus: MLDFEKPLFEIKNKIESLKESQEKNDVDLQEEIDMLEASLARETEKVYTNLKPWDRVQLARLQERPTSLDYIPHIFDSFIELHGDRNYRDDPAMIGGIGYLNGQAVTVVGQQRGKDTKDNIYRNFGMAHPEGYRKALRLMKQAEKFNRPIFSFIDTKGAYPGKAAEERGQSESIARNLVEMASLTVPVISIVIGEGGSGGALGLGITNRILMLENSTYSVISPEGASALLWKDSNLAKIAAETMKITAEDLYELNIADEVIKEPLGGAHHDVETQAQSIKRTFESHLSELNQLTQEELVEDRYQKFRTIGSYTE.

Positions 32–289 constitute a CoA carboxyltransferase C-terminal domain; the sequence is EIDMLEASLA…KRTFESHLSE (258 aa).

The protein belongs to the AccA family. Acetyl-CoA carboxylase is a heterohexamer composed of biotin carboxyl carrier protein (AccB), biotin carboxylase (AccC) and two subunits each of ACCase subunit alpha (AccA) and ACCase subunit beta (AccD).

The protein localises to the cytoplasm. The catalysed reaction is N(6)-carboxybiotinyl-L-lysyl-[protein] + acetyl-CoA = N(6)-biotinyl-L-lysyl-[protein] + malonyl-CoA. It functions in the pathway lipid metabolism; malonyl-CoA biosynthesis; malonyl-CoA from acetyl-CoA: step 1/1. Its function is as follows. Component of the acetyl coenzyme A carboxylase (ACC) complex. First, biotin carboxylase catalyzes the carboxylation of biotin on its carrier protein (BCCP) and then the CO(2) group is transferred by the carboxyltransferase to acetyl-CoA to form malonyl-CoA. This chain is Acetyl-coenzyme A carboxylase carboxyl transferase subunit alpha, found in Staphylococcus saprophyticus subsp. saprophyticus (strain ATCC 15305 / DSM 20229 / NCIMB 8711 / NCTC 7292 / S-41).